The sequence spans 207 residues: Large ribosomal subunit protein uL4 (207 aa).

Residues 52–75 are disordered; sequence KNRSAVRGGGKKPWRQKGTGRARQ. Basic residues predominate over residues 60-71; the sequence is GGKKPWRQKGTG.

The protein belongs to the universal ribosomal protein uL4 family. In terms of assembly, part of the 50S ribosomal subunit.

Its function is as follows. One of the primary rRNA binding proteins, this protein initially binds near the 5'-end of the 23S rRNA. It is important during the early stages of 50S assembly. It makes multiple contacts with different domains of the 23S rRNA in the assembled 50S subunit and ribosome. In terms of biological role, forms part of the polypeptide exit tunnel. This is Large ribosomal subunit protein uL4 from Limosilactobacillus fermentum (strain NBRC 3956 / LMG 18251) (Lactobacillus fermentum).